A 1001-amino-acid chain; its full sequence is Serine/threonine-protein kinase TAO1 (1001 aa).

Ser-9 is modified (phosphoserine). The Protein kinase domain maps to 28-281 (FTDLREIGHG…SEELLKHIFV (254 aa)). ATP-binding positions include 34–42 (IGHGSFGAV) and Lys-57. Catalysis depends on Asp-151, which acts as the Proton acceptor. Residues 324–433 (PAVEAQEEEE…QVSRHKSHYR (110 aa)) form a disordered region. Residues 350–373 (SNQSIPSMSISASSQSSSVNSLPD) are compositionally biased toward low complexity. Composition is skewed to basic and acidic residues over residues 375 to 388 (SDDK…EGDH) and 399 to 416 (LKPE…RTRA). 2 positions are modified to phosphoserine: Ser-421 and Ser-445. The stretch at 458-651 (SELREQMSGY…QTQKDLEHAM (194 aa)) forms a coiled coil. The interval 567-587 (KEELNENQSTPKKEKQEWLSK) is disordered. The span at 577 to 587 (PKKEKQEWLSK) shows a compositional bias: basic and acidic residues. Thr-669 bears the Phosphothreonine mark. Residues 754–877 (KAVLKRLKEE…LERQAREIEA (124 aa)) are a coiled coil. Residues 911-1001 (SHNPTGGPGP…ISNGSHMSYT (91 aa)) form a disordered region. The residue at position 965 (Ser-965) is a Phosphoserine. The span at 975–1001 (GGRTEQGMSRSTSVTSQISNGSHMSYT) shows a compositional bias: polar residues.

This sequence belongs to the protein kinase superfamily. STE Ser/Thr protein kinase family. STE20 subfamily. As to quaternary structure, self-associates. Interacts with MAP2K3. Interacts with SPRED1. Interacts with TESK1; the interaction inhibits TAOK1 kinase activity. Interacts with MAP3K7. Post-translationally, proteolytically processed by caspase-3 (CASP3). In terms of processing, autophosphorylated. Phosphorylated by ATM in response to DNA damage. Phosphorylated by LRRK2. In terms of tissue distribution, highly expressed in the testis, and to a lower extent also expressed in brain, placenta, colon and skeletal muscle.

The protein resides in the cytoplasm. It carries out the reaction L-seryl-[protein] + ATP = O-phospho-L-seryl-[protein] + ADP + H(+). The catalysed reaction is L-threonyl-[protein] + ATP = O-phospho-L-threonyl-[protein] + ADP + H(+). With respect to regulation, serine/threonine-protein kinase activity is inhibited by SPRED1. Functionally, serine/threonine-protein kinase involved in various processes such as p38/MAPK14 stress-activated MAPK cascade, DNA damage response and regulation of cytoskeleton stability. Phosphorylates MAP2K3, MAP2K6 and MARK2. Acts as an activator of the p38/MAPK14 stress-activated MAPK cascade by mediating phosphorylation and subsequent activation of the upstream MAP2K3 and MAP2K6 kinases. Involved in G-protein coupled receptor signaling to p38/MAPK14. In response to DNA damage, involved in the G2/M transition DNA damage checkpoint by activating the p38/MAPK14 stress-activated MAPK cascade, probably by mediating phosphorylation of MAP2K3 and MAP2K6. Acts as a regulator of cytoskeleton stability by phosphorylating 'Thr-208' of MARK2, leading to activate MARK2 kinase activity and subsequent phosphorylation and detachment of MAPT/TAU from microtubules. Also acts as a regulator of apoptosis: regulates apoptotic morphological changes, including cell contraction, membrane blebbing and apoptotic bodies formation via activation of the MAPK8/JNK cascade. Plays an essential role in the regulation of neuronal development in the central nervous system. Also plays a role in the regulation of neuronal migration to the cortical plate. This chain is Serine/threonine-protein kinase TAO1 (TAOK1), found in Homo sapiens (Human).